A 414-amino-acid polypeptide reads, in one-letter code: Esterase FrsA (414 aa).

Belongs to the FrsA family.

It catalyses the reaction a carboxylic ester + H2O = an alcohol + a carboxylate + H(+). In terms of biological role, catalyzes the hydrolysis of esters. The protein is Esterase FrsA of Shigella flexneri serotype 5b (strain 8401).